Here is a 284-residue protein sequence, read N- to C-terminus: Pantothenate synthetase (284 aa).

M30–H37 provides a ligand contact to ATP. H37 (proton donor) is an active-site residue. A (R)-pantoate-binding site is contributed by Q61. Q61 is a binding site for beta-alanine. Residue G149–D152 coordinates ATP. Residue Q155 coordinates (R)-pantoate. Residues I178 and L186–R189 each bind ATP.

The protein belongs to the pantothenate synthetase family. As to quaternary structure, homodimer.

It localises to the cytoplasm. The catalysed reaction is (R)-pantoate + beta-alanine + ATP = (R)-pantothenate + AMP + diphosphate + H(+). It functions in the pathway cofactor biosynthesis; (R)-pantothenate biosynthesis; (R)-pantothenate from (R)-pantoate and beta-alanine: step 1/1. In terms of biological role, catalyzes the condensation of pantoate with beta-alanine in an ATP-dependent reaction via a pantoyl-adenylate intermediate. The chain is Pantothenate synthetase from Salmonella paratyphi A (strain ATCC 9150 / SARB42).